Here is an 81-residue protein sequence, read N- to C-terminus: Sulfur carrier protein TusA (81 aa).

The active-site Cysteine persulfide intermediate is C19.

It belongs to the sulfur carrier protein TusA family. Interacts with IscS.

The protein localises to the cytoplasm. It functions in the pathway tRNA modification. Its function is as follows. Sulfur carrier protein involved in sulfur trafficking in the cell. Part of a sulfur-relay system required for 2-thiolation during synthesis of 2-thiouridine of the modified wobble base 5-methylaminomethyl-2-thiouridine (mnm(5)s(2)U) in tRNA. Interacts with IscS and stimulates its cysteine desulfurase activity. Accepts an activated sulfur from IscS, which is then transferred to TusD, and thus determines the direction of sulfur flow from IscS to 2-thiouridine formation. Also appears to be involved in sulfur transfer for the biosynthesis of molybdopterin. The polypeptide is Sulfur carrier protein TusA (Klebsiella pneumoniae subsp. pneumoniae (strain ATCC 700721 / MGH 78578)).